The sequence spans 313 residues: Olfactory receptor 1M1 (313 aa).

Over 1–25 the chain is Extracellular; that stretch reads MEPQNHTSASEFILLGLSEKPDHDP. A glycan (N-linked (GlcNAc...) asparagine) is linked at asparagine 5. Residues 26–46 form a helical membrane-spanning segment; that stretch reads VLFSLFLCMYMITVVGNLLII. Topologically, residues 47-54 are cytoplasmic; that stretch reads LAISFDSH. The chain crosses the membrane as a helical span at residues 55 to 75; the sequence is LHTPMYFFLANLSLVDFCLAT. The Extracellular portion of the chain corresponds to 76-97; sequence NTVPKMLVNIQTRNKSISYPCC. N-linked (GlcNAc...) asparagine glycosylation occurs at asparagine 89. Cysteine 97 and cysteine 179 are oxidised to a cystine. Residues 98–118 traverse the membrane as a helical segment; the sequence is LTQMYFFHFFGIMDSVLIAVM. At 119–142 the chain is on the cytoplasmic side; sequence AYDRFVAICHPLHYSTIMSPRLCG. A helical membrane pass occupies residues 143–163; the sequence is LLVGVPWVYSCFISLTHILLM. The Extracellular segment spans residues 164–196; the sequence is ARLVFCGKNELPHYFCDLTPLLRLSCTDTTVNK. A helical membrane pass occupies residues 197–217; the sequence is IFVLIVAGMVIATPFVCILAS. The Cytoplasmic segment spans residues 218–244; sequence YARIIVAIMKVPSAGGRKKAFSTCSSH. Residues 245–265 form a helical membrane-spanning segment; it reads LSVVALFYGTTIGVYLCPSSV. Over 266-274 the chain is Extracellular; the sequence is RTAVKEKAS. The helical transmembrane segment at 275–292 threads the bilayer; it reads AVMYTAVTPMLNPFIYSL. Residues 293–313 are Cytoplasmic-facing; it reads RNRDLKGALKKIINRKISTSS.

The protein belongs to the G-protein coupled receptor 1 family. Expressed in testis.

The protein resides in the cell membrane. Its function is as follows. Odorant receptor. The polypeptide is Olfactory receptor 1M1 (Mus musculus (Mouse)).